The primary structure comprises 165 residues: Ribosome maturation factor RimM (165 aa).

A PRC barrel domain is found at 90-161 (PDTYYVSDLK…KIIIKPVGEW (72 aa)).

The protein belongs to the RimM family. As to quaternary structure, binds ribosomal protein uS19.

Its subcellular location is the cytoplasm. Its function is as follows. An accessory protein needed during the final step in the assembly of 30S ribosomal subunit, possibly for assembly of the head region. Essential for efficient processing of 16S rRNA. May be needed both before and after RbfA during the maturation of 16S rRNA. It has affinity for free ribosomal 30S subunits but not for 70S ribosomes. This chain is Ribosome maturation factor RimM, found in Clostridium beijerinckii (strain ATCC 51743 / NCIMB 8052) (Clostridium acetobutylicum).